The following is a 333-amino-acid chain: T-cell surface glycoprotein CD1b1 (333 aa).

The N-terminal stretch at 1–17 (MLLVALALLAFLFPAGD) is a signal peptide. Residues 18-302 (TQNALQWPTS…LYWGHSISIG (285 aa)) are Extracellular-facing. 3 N-linked (GlcNAc...) asparagine glycosylation sites follow: asparagine 38, asparagine 75, and asparagine 146. Intrachain disulfides connect cysteine 120–cysteine 184, cysteine 149–cysteine 163, and cysteine 224–cysteine 279. The region spanning 197–295 (PDIQKQVKPD…LEGQDIILYW (99 aa)) is the Ig-like domain. Residues 303–323 (WIILAVLVPCLIVLVLFVLWF) form a helical membrane-spanning segment. The Cytoplasmic segment spans residues 324-333 (YRRWSYEDIL). The short motif at 329–332 (YEDI) is the Internalization signal element.

Heterodimer with B2M (beta-2-microglobulin). Interacts with saposin C.

The protein localises to the cell membrane. It is found in the endosome membrane. It localises to the lysosome membrane. Antigen-presenting protein that binds self and non-self lipid and glycolipid antigens and presents them to T-cell receptors on natural killer T-cells. The chain is T-cell surface glycoprotein CD1b1 (CD1B1) from Cavia porcellus (Guinea pig).